The chain runs to 906 residues: Protein translocase subunit SecA (906 aa).

Residues glutamine 87, 105-109, and aspartate 521 each bind ATP; that span reads GEGKT. Residues 849–865 show a composition bias toward low complexity; the sequence is STATAAEPAPEASQSQS. The tract at residues 849-897 is disordered; that stretch reads STATAAEPAPEASQSQSTNDATASQNPPITEVEASKVGRNQPCPCGSGK. Polar residues predominate over residues 866–876; the sequence is TNDATASQNPP. Cysteine 891, cysteine 893, cysteine 902, and cysteine 903 together coordinate Zn(2+).

The protein belongs to the SecA family. Monomer and homodimer. Part of the essential Sec protein translocation apparatus which comprises SecA, SecYEG and auxiliary proteins SecDF-YajC and YidC. It depends on Zn(2+) as a cofactor.

Its subcellular location is the cell inner membrane. It localises to the cytoplasm. The catalysed reaction is ATP + H2O + cellular proteinSide 1 = ADP + phosphate + cellular proteinSide 2.. Its function is as follows. Part of the Sec protein translocase complex. Interacts with the SecYEG preprotein conducting channel. Has a central role in coupling the hydrolysis of ATP to the transfer of proteins into and across the cell membrane, serving both as a receptor for the preprotein-SecB complex and as an ATP-driven molecular motor driving the stepwise translocation of polypeptide chains across the membrane. The chain is Protein translocase subunit SecA from Dichelobacter nodosus (strain VCS1703A).